The sequence spans 25 residues: Pregnancy-associated glycoprotein 59g (25 aa).

N-linked (GlcNAc...) asparagine glycosylation occurs at Asn4.

The protein belongs to the peptidase A1 family. Highly expressed in the placenta between day 60 and day 100 of gestation.

The protein localises to the secreted. The protein resides in the extracellular space. In Ovis aries (Sheep), this protein is Pregnancy-associated glycoprotein 59g.